Here is a 320-residue protein sequence, read N- to C-terminus: Methionyl-tRNA formyltransferase (320 aa).

111 to 114 (SLLP) lines the (6S)-5,6,7,8-tetrahydrofolate pocket.

Belongs to the Fmt family.

It catalyses the reaction L-methionyl-tRNA(fMet) + (6R)-10-formyltetrahydrofolate = N-formyl-L-methionyl-tRNA(fMet) + (6S)-5,6,7,8-tetrahydrofolate + H(+). Attaches a formyl group to the free amino group of methionyl-tRNA(fMet). The formyl group appears to play a dual role in the initiator identity of N-formylmethionyl-tRNA by promoting its recognition by IF2 and preventing the misappropriation of this tRNA by the elongation apparatus. This Bifidobacterium adolescentis (strain ATCC 15703 / DSM 20083 / NCTC 11814 / E194a) protein is Methionyl-tRNA formyltransferase.